Reading from the N-terminus, the 116-residue chain is Large ribosomal subunit protein bL19 (116 aa).

The protein belongs to the bacterial ribosomal protein bL19 family.

In terms of biological role, this protein is located at the 30S-50S ribosomal subunit interface and may play a role in the structure and function of the aminoacyl-tRNA binding site. The chain is Large ribosomal subunit protein bL19 from Roseiflexus castenholzii (strain DSM 13941 / HLO8).